Reading from the N-terminus, the 984-residue chain is MSVLGEYERHCDSINSDFGSESGGGGDSGPGPSAVPGPRAGGGAAEQEELHYIPIRVLGRGAFGEATLYRRTEDDSLVVWKEVDLTRLSEKERRDALNEIVILALLQHDNIIAYYNHFMDNTTLLIELEYCNGGNLYDKILRQKDKLFEEEMVVWYLFQIVSAVSCIHKAGILHRDIKTLNIFLTKANLIKLGDYGLAKKLNSEYSMAETLVGTPYYMSPELCQGVKYNFKSDIWAVGCVIFELLTLKRTFDATNPLNLCVKIVQGIRAMEVDSSQYSLELIQLVHACLDQDPEQRPAADALLDLPLLRTRRREMEEKVTLLNAPTKRPRSSTVTEAPIAVVTSRTSEVYVWGGGKSTPQKLDVIKSGCSARQVCAGNTHFAVVTVEKELYTWVNMQGGTKLHGQLGHGDKASYRQPKHVEKLQGKAIHQVSCGDDFTVCVTDEGQLYAFGSDYYGCMGVDKVSGPEVLEPMQLNFFLSNPVEQVSCGDNHVVVLTRNKEVYSWGCGEYGRLGLDSEEDYYTPQRVDVPKALIIVAVQCGCDGTFLLTQSGKVLACGLNEFNKLGLNQCMSGIINHEAYHEVPYTTSFTLAKQLSFYKIRTIAPGKTHTAAIDERGRLLTFGCNKCGQLGVGNYKKRLGINLLGGPLGGKQVIRVSCGDEFTIAATDDNHIFAWGNGGNGRLAMTPTERPHGSDICTSWPRPIFGSLHHVPDLSCRGWHTILIVEKVLNSKTIRSNSSGLSIGTVVQSSSPGGGIGGGGGGGGGGGGEEEDSQQESETPDPSGGFRGTMEADRGMEGLISPTEAVGNSCGASSSCPGWLRKELENAEFIPMPDSPAPLSAAFSQSEKDTLPYEELQGLKVASEVPPEPQRAAGAWPPRLDPAVPCVGKALTSAACACSALQVEVDRLQALVLKCLEEQQKLQQENLQMFTQLQKLNKKLEGGQQVGMHSRGTQTAKEEMEMDPKPDLDSESWCLLGTDSCRPSL.

The residue at position 2 (serine 2) is an N-acetylserine. A phosphoserine mark is found at serine 2, serine 13, serine 16, and serine 20. The tract at residues 14 to 43 (INSDFGSESGGGGDSGPGPSAVPGPRAGGG) is disordered. Phosphotyrosine is present on tyrosine 52. Residues 52–308 (YIPIRVLGRG…ADALLDLPLL (257 aa)) form the Protein kinase domain. 58–66 (LGRGAFGEA) contributes to the ATP binding site. Phosphoserine is present on serine 76. Lysine 81 serves as a coordination point for ATP. Catalysis depends on aspartate 176, which acts as the Proton acceptor. Threonine 210 is modified (phosphothreonine; by autocatalysis). A Phosphothreonine modification is found at threonine 254. Residue serine 331 is modified to Phosphoserine. Threonine 333 carries the post-translational modification Phosphothreonine. RCC1 repeat units follow at residues 388 to 444 (KELY…VTDE), 445 to 498 (GQLY…LTRN), 499 to 550 (KEVY…LTQS), 551 to 615 (GKVL…IDER), 616 to 668 (GRLL…ATDD), and 669 to 726 (NHIF…IVEK). An interaction with NEK6 region spans residues 732 to 896 (TIRSNSSGLS…GKALTSAACA (165 aa)). Serine 741 is modified (phosphoserine). A disordered region spans residues 744–790 (TVVQSSSPGGGIGGGGGGGGGGGGEEEDSQQESETPDPSGGFRGTME). Residues 751–766 (PGGGIGGGGGGGGGGG) show a composition bias toward gly residues. The segment covering 767–778 (GEEEDSQQESET) has biased composition (acidic residues). 2 positions are modified to phosphoserine: serine 808 and serine 839. Threonine 891 bears the Phosphothreonine mark. A coiled-coil region spans residues 896-945 (ACSALQVEVDRLQALVLKCLEEQQKLQQENLQMFTQLQKLNKKLEGGQQV). The interval 940-984 (EGGQQVGMHSRGTQTAKEEMEMDPKPDLDSESWCLLGTDSCRPSL) is disordered. Residue serine 949 is modified to Phosphoserine. Positions 955-967 (AKEEMEMDPKPDL) are enriched in basic and acidic residues. Serine 983 carries the post-translational modification Phosphoserine.

This sequence belongs to the protein kinase superfamily. NEK Ser/Thr protein kinase family. NIMA subfamily. As to quaternary structure, homodimer; homodimerization is required to activate NEK7. Binds to Ran GTPase. Has a greater affinity for Ran-GDP over Ran-GTP. Interacts with SSRP1 and SUPT16H, the 2 subunits of the FACT complex. Interacts with DYNLL1; phosphorylation at Ser-949 strongly reduces DYNLL1 binding. It depends on Mg(2+) as a cofactor. In terms of processing, autophosphorylated on serine and threonine residues. When complexed with FACT, exhibits markedly elevated phosphorylation on Thr-210. During mitosis, not phosphorylated on Thr-210. Phosphorylated by CDK1 in vitro.

The protein resides in the cytoplasm. The protein localises to the nucleus. The enzyme catalyses L-seryl-[protein] + ATP = O-phospho-L-seryl-[protein] + ADP + H(+). The catalysed reaction is L-threonyl-[protein] + ATP = O-phospho-L-threonyl-[protein] + ADP + H(+). Activated during mitosis by intramolecular autophosphorylation. Activity and autophosphorylation is activated by manganese &gt;&gt; magnesium ions. It is not cell-cycle regulated but activity is higher in G0-arrested cells. In terms of biological role, pleiotropic regulator of mitotic progression, participating in the control of spindle dynamics and chromosome separation. Phosphorylates different histones, myelin basic protein, beta-casein, and BICD2. Phosphorylates histone H3 on serine and threonine residues and beta-casein on serine residues. Important for G1/S transition and S phase progression. Phosphorylates NEK6 and NEK7 and stimulates their activity by releasing the autoinhibitory functions of Tyr-108 and Tyr-97 respectively. The polypeptide is Serine/threonine-protein kinase Nek9 (Mus musculus (Mouse)).